The primary structure comprises 341 residues: Ribonucleoside-diphosphate reductase small chain A (341 aa).

Positions 1–20 (MGSLKEGQGRDMEEGESEEP) are disordered. 3 residues coordinate Fe cation: aspartate 87, glutamate 118, and histidine 121. Tyrosine 125 is an active-site residue. Glutamate 180, glutamate 214, and histidine 217 together coordinate Fe cation.

Belongs to the ribonucleoside diphosphate reductase small chain family. As to quaternary structure, homodimer and heterodimer with TSO2. Heterotetramer of two R1 and two R2 chains. A radical transfer pathway may occur between Tyr-125 of protein R2 and R1. Homodimer contains a dinuclear non-heme iron center and a stable tyrosyl radical essential for activity. A transfer pathway may occur between Tyr-125 of protein R2 and R1. Interacts with CSN7. It depends on Fe cation as a cofactor. In terms of tissue distribution, expressed in rosette leaves, cauline leaves, stems and flowers.

It is found in the cytoplasm. The enzyme catalyses a 2'-deoxyribonucleoside 5'-diphosphate + [thioredoxin]-disulfide + H2O = a ribonucleoside 5'-diphosphate + [thioredoxin]-dithiol. With respect to regulation, inhibited by phenol, paracetamol, 2,4,6-trimethylphenol, resveratrol, furfuryl mercaptan, 2-thiophenthiol, phenylhydrazine, and hydroxyurea. Provides the precursors necessary for DNA synthesis. Catalyzes the biosynthesis of deoxyribonucleotides from the corresponding ribonucleotides. This Arabidopsis thaliana (Mouse-ear cress) protein is Ribonucleoside-diphosphate reductase small chain A (RNR2A).